The following is a 348-amino-acid chain: dTDP-glucose 4,6-dehydratase (348 aa).

NAD(+) contacts are provided by residues 15–16 (FI), 37–40 (DKLT), 62–63 (DI), and 82–86 (YAAES). 2 residues coordinate substrate: serine 86 and asparagine 88. NAD(+) is bound at residue threonine 101. A substrate-binding site is contributed by threonine 125. Aspartate 126 (proton donor) is an active-site residue. Active-site proton acceptor residues include glutamate 127 and tyrosine 161. 161–165 (YSSTK) contributes to the NAD(+) binding site. Residue asparagine 190 participates in substrate binding. Asparagine 191 provides a ligand contact to NAD(+). Substrate-binding positions include 200 to 205 (KFIPRQ), 216 to 218 (KLY), arginine 225, asparagine 260, and 283 to 287 (DRAGH).

It belongs to the NAD(P)-dependent epimerase/dehydratase family. dTDP-glucose dehydratase subfamily. Homodimer. It depends on NAD(+) as a cofactor.

It carries out the reaction dTDP-alpha-D-glucose = dTDP-4-dehydro-6-deoxy-alpha-D-glucose + H2O. Its pathway is carbohydrate biosynthesis; dTDP-L-rhamnose biosynthesis. Catalyzes the dehydration of dTDP-D-glucose to form dTDP-6-deoxy-D-xylo-4-hexulose via a three-step process involving oxidation, dehydration and reduction. The polypeptide is dTDP-glucose 4,6-dehydratase (rmlB) (Streptococcus mutans serotype c (strain ATCC 700610 / UA159)).